The following is a 341-amino-acid chain: Anthranilate phosphoribosyltransferase (341 aa).

5-phospho-alpha-D-ribose 1-diphosphate contacts are provided by residues Gly81, 84-85 (GD), Thr89, 91-94 (NIST), 109-117 (KHGSRSVSG), and Ser121. Gly81 serves as a coordination point for anthranilate. Ser93 lines the Mg(2+) pocket. An anthranilate-binding site is contributed by Arg167. Positions 226 and 227 each coordinate Mg(2+).

Belongs to the anthranilate phosphoribosyltransferase family. Homodimer. The cofactor is Mg(2+).

The enzyme catalyses N-(5-phospho-beta-D-ribosyl)anthranilate + diphosphate = 5-phospho-alpha-D-ribose 1-diphosphate + anthranilate. It participates in amino-acid biosynthesis; L-tryptophan biosynthesis; L-tryptophan from chorismate: step 2/5. Catalyzes the transfer of the phosphoribosyl group of 5-phosphorylribose-1-pyrophosphate (PRPP) to anthranilate to yield N-(5'-phosphoribosyl)-anthranilate (PRA). The sequence is that of Anthranilate phosphoribosyltransferase from Methylococcus capsulatus (strain ATCC 33009 / NCIMB 11132 / Bath).